The primary structure comprises 62 residues: MDILKKSLFLVLFLGLVSFSICEEEKRDTEEEENDDEIEEESEEKKREAPERPPGFTPFRIY.

An N-terminal signal peptide occupies residues 1 to 22; it reads MDILKKSLFLVLFLGLVSFSIC. Residues 24–62 are disordered; it reads EEKRDTEEEENDDEIEEESEEKKREAPERPPGFTPFRIY. The span at 30–42 shows a compositional bias: acidic residues; it reads EEEENDDEIEEES. Pro54 is subject to 4-hydroxyproline; partial. Tyr62 bears the Sulfotyrosine mark.

The protein belongs to the frog skin active peptide (FSAP) family. Bradykinin-related peptide subfamily. As to expression, expressed by the skin glands.

The protein localises to the secreted. In terms of biological role, inhibits ACE with a Ki of 1.6 uM, and targets B2 bradykinin receptor (BDKRB2). Provokes contraction of smooth muscle preparation (ileum). In vivo, induces an early hyperalgesic effects in living rats after intraplantar injection. The chain is Kininogen-1 from Phyllomedusa sauvagei (Sauvage's leaf frog).